The primary structure comprises 566 residues: Phenylalanine--tRNA ligase beta subunit (566 aa).

The B5 domain maps to 287 to 362 (YFQEEVEFDV…IGEGLASFYP (76 aa)). Mg(2+) contacts are provided by aspartate 340, aspartate 346, glutamate 349, and aspartate 350.

This sequence belongs to the phenylalanyl-tRNA synthetase beta subunit family. Type 2 subfamily. As to quaternary structure, tetramer of two alpha and two beta subunits. Requires Mg(2+) as cofactor.

Its subcellular location is the cytoplasm. The catalysed reaction is tRNA(Phe) + L-phenylalanine + ATP = L-phenylalanyl-tRNA(Phe) + AMP + diphosphate + H(+). The chain is Phenylalanine--tRNA ligase beta subunit from Borrelia garinii subsp. bavariensis (strain ATCC BAA-2496 / DSM 23469 / PBi) (Borreliella bavariensis).